Consider the following 598-residue polypeptide: Probable translation initiation factor IF-2 (598 aa).

Positions Leu3 to Lys225 constitute a tr-type G domain. Residues Gly12 to Thr19 are G1. Gly12 to Thr19 is a binding site for GTP. The segment at Gly37–His41 is G2. The segment at Asp76–Gly79 is G3. GTP is bound by residues Asp76 to His80 and Asn130 to Asp133. The G4 stretch occupies residues Asn130–Asp133. Residues Ser200–Met202 form a G5 region.

This sequence belongs to the TRAFAC class translation factor GTPase superfamily. Classic translation factor GTPase family. IF-2 subfamily.

Function in general translation initiation by promoting the binding of the formylmethionine-tRNA to ribosomes. Seems to function along with eIF-2. The sequence is that of Probable translation initiation factor IF-2 from Methanococcus maripaludis (strain C5 / ATCC BAA-1333).